Reading from the N-terminus, the 700-residue chain is Phenoloxidase 8 (700 aa).

Positions 1–51 (MATLTQKFHGLLQHPLEPLFLPKNDGTLFYDLPERFLTSRYSPIGQNLANR) are excised as a propeptide. N-linked (GlcNAc...) asparagine glycans are attached at residues asparagine 64 and asparagine 198. Cu cation-binding residues include histidine 223, histidine 227, and histidine 252. Asparagine 295 carries N-linked (GlcNAc...) asparagine glycosylation. The active-site Proton acceptor is the glutamate 364. Residues histidine 379, histidine 383, and histidine 419 each contribute to the Cu cation site. N-linked (GlcNAc...) asparagine glycosylation is found at asparagine 445, asparagine 507, and asparagine 565. 2 disulfide bridges follow: cysteine 592/cysteine 636 and cysteine 594/cysteine 643.

This sequence belongs to the tyrosinase family. As to quaternary structure, homodimer. Requires Cu(2+) as cofactor. Upon activation, a trypsin type protease cleaves prophenol oxidase to yield the active enzyme.

The protein resides in the secreted. The enzyme catalyses 2 tyramine + O2 = 2 dopamine. It catalyses the reaction 2 dopamine + O2 = 2 dopamine quinone + 2 H2O. This is a copper-containing oxidase that functions in the formation of pigments such as melanins and other polyphenolic compounds. Catalyzes the oxidation of o-diphenols such as dopamine. Also oxidizes monophenols such as tyramine. This Anopheles gambiae (African malaria mosquito) protein is Phenoloxidase 8.